A 345-amino-acid polypeptide reads, in one-letter code: 3'-5' exoribonuclease 1 (345 aa).

2 stretches are compositionally biased toward basic and acidic residues: residues 1–11 (MEDERGRERGG) and 19–46 (PRPE…ETDG). The disordered stretch occupies residues 1–50 (MEDERGRERGGDAAQQKTPRPECEESRPLSVEKKQRCRLDGKETDGSKFI). Ser55 and Ser58 each carry phosphoserine. The SAP domain occupies 72–106 (INRMSKEELRAKLSEFKLETRGVKDVLKKRLKNYY). The Exonuclease domain occupies 126-302 (ICIIDFEATC…DDSKNIARIA (177 aa)). The Mg(2+) site is built by Asp130 and Glu132. The Proton acceptor role is filled by Glu132. Residues Glu132 and Ala133 each contribute to the AMP site. Residue Asp230 participates in Mg(2+) binding. His289 acts as the Proton acceptor in catalysis. His289 provides a ligand contact to AMP. Residue Asp294 participates in Mg(2+) binding.

In terms of assembly, identified in a histone pre-mRNA complex, at least composed of ERI1, LSM11, SLBP, SNRPB, SYNCRIP and YBX1. Binds to 40S and 60S ribosomal subunits and to 80S assembled ribosomes. Interacts in a cooperative manner with SLBP to the mature 3'-end of histone mRNAs. Found in a ternary complex with SLBP and the stem-loop structure of the 3'-end of histone mRNAs. It depends on Mg(2+) as a cofactor. As to expression, widely expressed with high levels in spleen, thymus and testis (at protein level).

It is found in the cytoplasm. The protein localises to the nucleus. It localises to the nucleolus. The catalysed reaction is Exonucleolytic cleavage in the 3'- to 5'-direction to yield nucleoside 5'-phosphates.. With respect to regulation, although it can bind simultaneously with SLBP to the 3'-end of histone mRNA, the presence of SLBP prevents the exonuclease activity. In terms of biological role, RNA exonuclease that binds to the 3'-end of histone mRNAs and degrades them, suggesting that it plays an essential role in histone mRNA decay after replication. A 2' and 3'-hydroxyl groups at the last nucleotide of the histone 3'-end is required for efficient 3'-end histone mRNA exonuclease activity and degradation of RNA substrates. Also able to degrade the 3'-overhangs of short interfering RNAs (siRNAs) in vitro, suggesting a possible role as regulator of RNA interference (RNAi). Required for binding the 5'-ACCCA-3' sequence present in stem-loop structure. Able to bind other mRNAs. Required for 5.8S rRNA 3'-end processing. Also binds to 5.8s ribosomal RNA. Binds with high affinity to the stem-loop structure of replication-dependent histone pre-mRNAs. In vitro, does not have sequence specificity. In vitro, has weak DNA exonuclease activity. In vitro, shows biphasic kinetics such that there is rapid hydrolysis of the last three unpaired RNA nucleotides in the 39 flanking sequence followed by a much slower cleavage through the stem that occurs over a longer incubation period in the order of hours. ERI1-mediated RNA metabolism plays a key role in chondrogenesis. In Mus musculus (Mouse), this protein is 3'-5' exoribonuclease 1 (Eri1).